We begin with the raw amino-acid sequence, 368 residues long: Protein mab-21-like 3 (368 aa).

The protein belongs to the mab-21 family.

The protein is Protein mab-21-like 3 (mab21L3) of Xenopus laevis (African clawed frog).